A 246-amino-acid polypeptide reads, in one-letter code: UPF0736 protein GK0808 (246 aa).

Belongs to the UPF0736 family.

The protein is UPF0736 protein GK0808 of Geobacillus kaustophilus (strain HTA426).